The sequence spans 286 residues: Orotidine 5'-phosphate decarboxylase (286 aa).

Lys-97 acts as the Proton donor in catalysis.

This sequence belongs to the OMP decarboxylase family. Type 2 subfamily.

The catalysed reaction is orotidine 5'-phosphate + H(+) = UMP + CO2. It functions in the pathway pyrimidine metabolism; UMP biosynthesis via de novo pathway; UMP from orotate: step 2/2. The sequence is that of Orotidine 5'-phosphate decarboxylase (pyrF) from Clostridium acetobutylicum (strain ATCC 824 / DSM 792 / JCM 1419 / IAM 19013 / LMG 5710 / NBRC 13948 / NRRL B-527 / VKM B-1787 / 2291 / W).